The primary structure comprises 444 residues: C4-dicarboxylate transport protein (444 aa).

The next 8 helical transmembrane spans lie at 19–39 (HLYF…HFYP), 55–75 (LVKM…IAGM), 90–110 (IYFL…SNIL), 161–181 (ILQV…VGDL), 199–219 (LVAI…AFTI), 230–250 (LAFL…VVLG), 343–363 (LLLV…AGFI), and 366–386 (AATL…ILGI).

The protein belongs to the dicarboxylate/amino acid:cation symporter (DAACS) (TC 2.A.23) family.

The protein localises to the cell inner membrane. In terms of biological role, responsible for the transport of dicarboxylates such as succinate, fumarate, and malate from the periplasm across the membrane. This is C4-dicarboxylate transport protein from Allorhizobium ampelinum (strain ATCC BAA-846 / DSM 112012 / S4) (Agrobacterium vitis (strain S4)).